A 333-amino-acid polypeptide reads, in one-letter code: Ferredoxin--NADP reductase (333 aa).

FAD-binding residues include Asp-32, Gln-40, Tyr-45, Ala-85, Phe-119, Asp-285, and Thr-326.

This sequence belongs to the ferredoxin--NADP reductase type 2 family. As to quaternary structure, homodimer. FAD serves as cofactor.

It carries out the reaction 2 reduced [2Fe-2S]-[ferredoxin] + NADP(+) + H(+) = 2 oxidized [2Fe-2S]-[ferredoxin] + NADPH. This is Ferredoxin--NADP reductase from Neorickettsia sennetsu (strain ATCC VR-367 / Miyayama) (Ehrlichia sennetsu).